The sequence spans 440 residues: Xylose isomerase (440 aa).

Catalysis depends on residues H101 and D104. Mg(2+) contacts are provided by E232, E268, H271, D296, D307, D309, and D339.

Belongs to the xylose isomerase family. Homotetramer. Mg(2+) is required as a cofactor.

It localises to the cytoplasm. It catalyses the reaction alpha-D-xylose = alpha-D-xylulofuranose. This is Xylose isomerase from Salmonella dublin (strain CT_02021853).